A 469-amino-acid chain; its full sequence is Crinkler effector protein 1 (469 aa).

The signal sequence occupies residues 1 to 17 (MSITLLCLIKGNTLANA). Positions 18-57 (FPVDIDKDQLVGHLKKVIKAEQPQTFANVDAKDLKLWRVP) are LQLFLAK-like domain. A DWL domain region spans residues 58–96 (ISDDHDDQLRNLSLEDSDELLAIRKISKYFPDSPPEECI). The N-linked (GlcNAc...) asparagine glycan is linked to Asn68. The HVLVXXP motif signature appears at 97–103 (HVLVEPP). Residues Asn126, Asn181, and Asn248 are each glycosylated (N-linked (GlcNAc...) asparagine).

Belongs to the Crinkler effector family. Homodimer.

Its subcellular location is the secreted. It is found in the host nucleus. Functionally, effector that participates in the arbuscule development step of the symbiosis. Arbuscular mycorrhizal (AM) symbiosis is one of the most prominent and beneficial plant-microbe interactions that facilitates mineral nutrition and confers tolerance to biotic and abiotic stresses. Is not involved in cell death processes. This Rhizophagus irregularis (strain DAOM 181602 / DAOM 197198 / MUCL 43194) (Arbuscular mycorrhizal fungus) protein is Crinkler effector protein 1.